We begin with the raw amino-acid sequence, 303 residues long: Polyisoprenyl-teichoic acid--peptidoglycan teichoic acid transferase TagU (303 aa).

Residues 1–4 (MKKK) lie on the Cytoplasmic side of the membrane. The chain crosses the membrane as a helical; Signal-anchor for type II membrane protein span at residues 5–25 (ILFWVLGILGVLIIGGGIYAY). Residues 26 to 303 (NVYSSVSNTL…KLRTHLEVTK (278 aa)) are Extracellular-facing.

The protein belongs to the LytR/CpsA/Psr (LCP) family.

It is found in the cell membrane. Its pathway is cell wall biogenesis. May catalyze the final step in cell wall teichoic acid biosynthesis, the transfer of the anionic cell wall polymers (APs) from their lipid-linked precursor to the cell wall peptidoglycan (PG). In Bacillus anthracis (strain A0248), this protein is Polyisoprenyl-teichoic acid--peptidoglycan teichoic acid transferase TagU.